The following is a 565-amino-acid chain: Transcription factor asqA (565 aa).

Positions 204–273 (MDTAMAQAVR…HSMPALCIDS (70 aa)) are fungal transcription factor domain.

The protein resides in the nucleus. Its function is as follows. Transcription factor that regulates specifically the 4'-methoxyviridicatin/aspoquinolone biosynthesis cluster. This chain is Transcription factor asqA, found in Emericella nidulans (strain FGSC A4 / ATCC 38163 / CBS 112.46 / NRRL 194 / M139) (Aspergillus nidulans).